Reading from the N-terminus, the 299-residue chain is Sulfate adenylyltransferase subunit 2 (299 aa).

The protein belongs to the PAPS reductase family. CysD subfamily. Heterodimer composed of CysD, the smaller subunit, and CysN.

The catalysed reaction is sulfate + ATP + H(+) = adenosine 5'-phosphosulfate + diphosphate. It participates in sulfur metabolism; hydrogen sulfide biosynthesis; sulfite from sulfate: step 1/3. With CysN forms the ATP sulfurylase (ATPS) that catalyzes the adenylation of sulfate producing adenosine 5'-phosphosulfate (APS) and diphosphate, the first enzymatic step in sulfur assimilation pathway. APS synthesis involves the formation of a high-energy phosphoric-sulfuric acid anhydride bond driven by GTP hydrolysis by CysN coupled to ATP hydrolysis by CysD. This chain is Sulfate adenylyltransferase subunit 2, found in Colwellia psychrerythraea (strain 34H / ATCC BAA-681) (Vibrio psychroerythus).